We begin with the raw amino-acid sequence, 153 residues long: Superoxide dismutase [Cu-Zn] (153 aa).

Histidine 45, histidine 47, and histidine 62 together coordinate Cu cation. Cysteine 56 and cysteine 145 are disulfide-bonded. 4 residues coordinate Zn(2+): histidine 62, histidine 70, histidine 79, and aspartate 82. A Cu cation-binding site is contributed by histidine 119.

Belongs to the Cu-Zn superoxide dismutase family. Homodimer. Cu cation is required as a cofactor. Zn(2+) serves as cofactor.

The protein localises to the cytoplasm. The enzyme catalyses 2 superoxide + 2 H(+) = H2O2 + O2. Functionally, destroys radicals which are normally produced within the cells and which are toxic to biological systems. This Drosophila teissieri (Fruit fly) protein is Superoxide dismutase [Cu-Zn].